The chain runs to 246 residues: Alpha-tubulin N-acetyltransferase (246 aa).

The N-acetyltransferase domain maps to 21–202 (LTLVPDGVSR…NNFVVFHSFF (182 aa)). Acetyl-CoA is bound by residues 135–148 (FYVDESCQRQGYGK) and 172–181 (SNKLLGFLRK).

Belongs to the acetyltransferase ATAT1 family.

It catalyses the reaction L-lysyl-[alpha-tubulin] + acetyl-CoA = N(6)-acetyl-L-lysyl-[alpha-tubulin] + CoA + H(+). Its function is as follows. Specifically acetylates 'Lys-40' in alpha-tubulin on the lumenal side of microtubules. Promotes microtubule destabilization and accelerates microtubule dynamics; this activity may be independent of acetylation activity. Acetylates alpha-tubulin with a slow enzymatic rate, due to a catalytic site that is not optimized for acetyl transfer. Enters the microtubule through each end and diffuses quickly throughout the lumen of microtubules. Acetylates only long/old microtubules because of its slow acetylation rate since it does not have time to act on dynamically unstable microtubules before the enzyme is released. This is Alpha-tubulin N-acetyltransferase from Leishmania major.